The chain runs to 185 residues: Ribosome-recycling factor (185 aa).

It belongs to the RRF family.

The protein localises to the cytoplasm. Functionally, responsible for the release of ribosomes from messenger RNA at the termination of protein biosynthesis. May increase the efficiency of translation by recycling ribosomes from one round of translation to another. This is Ribosome-recycling factor from Alkalilimnicola ehrlichii (strain ATCC BAA-1101 / DSM 17681 / MLHE-1).